The sequence spans 91 residues: Small ribosomal subunit protein bS6 (91 aa).

Belongs to the bacterial ribosomal protein bS6 family.

In terms of biological role, binds together with bS18 to 16S ribosomal RNA. This is Small ribosomal subunit protein bS6 from Leptospira interrogans serogroup Icterohaemorrhagiae serovar copenhageni (strain Fiocruz L1-130).